The primary structure comprises 665 residues: Succinate dehydrogenase [ubiquinone] flavoprotein subunit A, mitochondrial (665 aa).

The transit peptide at 1-45 (MALLKVAPSRLLSRALQLASRVQNCTPTVTTARRNFHFTVYGRKD) directs the protein to the mitochondrion. A72, A75, T94, K95, and S101 together coordinate FAD. At H102 the chain carries Tele-8alpha-FAD histidine. Residues T103, G108, A224, and D278 each coordinate FAD. Oxaloacetate-binding residues include H299, R343, and H410. R343 (proton acceptor) is an active-site residue. Residue E443 coordinates FAD. Oxaloacetate is bound by residues R454 and A457. S459 and L460 together coordinate FAD.

This sequence belongs to the FAD-dependent oxidoreductase 2 family. FRD/SDH subfamily. As to quaternary structure, component of complex II composed of four subunits: a flavoprotein (FP), an iron-sulfur protein (IP), and a cytochrome b composed of a large and a small subunit. It depends on FAD as a cofactor.

It localises to the mitochondrion inner membrane. It carries out the reaction a ubiquinone + succinate = a ubiquinol + fumarate. It catalyses the reaction (R)-malate + a quinone = enol-oxaloacetate + a quinol. The enzyme catalyses (S)-malate + a quinone = enol-oxaloacetate + a quinol. The protein operates within carbohydrate metabolism; tricarboxylic acid cycle; fumarate from succinate (eukaryal route): step 1/1. Enol-oxaloacetate inhibits the succinate dehydrogenase activity. In terms of biological role, flavoprotein (FP) subunit of succinate dehydrogenase (SDH) that is involved in complex II of the mitochondrial electron transport chain and is responsible for transferring electrons from succinate to ubiquinone (coenzyme Q). SDH also oxidizes malate to the non-canonical enol form of oxaloacetate, enol-oxaloacetate. Enol-oxaloacetate, which is a potent inhibitor of the succinate dehydrogenase activity, is further isomerized into keto-oxaloacetate. The protein is Succinate dehydrogenase [ubiquinone] flavoprotein subunit A, mitochondrial (sdha-a) of Xenopus laevis (African clawed frog).